Reading from the N-terminus, the 255-residue chain is Type III pantothenate kinase (255 aa).

12 to 19 contacts ATP; it reads DIGNSYTK. Residue 109 to 112 participates in substrate binding; sequence GDDL. Aspartate 111 serves as the catalytic Proton acceptor. Threonine 133 serves as a coordination point for ATP. Threonine 185 contributes to the substrate binding site.

This sequence belongs to the type III pantothenate kinase family. As to quaternary structure, homodimer. The cofactor is NH4(+). K(+) is required as a cofactor.

The protein resides in the cytoplasm. The catalysed reaction is (R)-pantothenate + ATP = (R)-4'-phosphopantothenate + ADP + H(+). Its pathway is cofactor biosynthesis; coenzyme A biosynthesis; CoA from (R)-pantothenate: step 1/5. Functionally, catalyzes the phosphorylation of pantothenate (Pan), the first step in CoA biosynthesis. This chain is Type III pantothenate kinase, found in Malacoplasma penetrans (strain HF-2) (Mycoplasma penetrans).